A 282-amino-acid chain; its full sequence is DegV domain-containing protein M6_Spy0690 (282 aa).

Residues 3–280 (LAVITDSTAT…EGAIAFGVTP (278 aa)) form the DegV domain. Hexadecanoate is bound by residues Thr61 and Ser94.

Functionally, may bind long-chain fatty acids, such as palmitate, and may play a role in lipid transport or fatty acid metabolism. This Streptococcus pyogenes serotype M6 (strain ATCC BAA-946 / MGAS10394) protein is DegV domain-containing protein M6_Spy0690.